We begin with the raw amino-acid sequence, 496 residues long: Thiamine transporter 2 (496 aa).

Over 1–7 (MDCYRTS) the chain is Cytoplasmic. Residues 8 to 28 (PSNSWIYTTVILCIFGFFSMM) form a helical membrane-spanning segment. Residues 29–53 (RPSEPFLIPYLSGPDKNLTSEEMTN) lie on the Extracellular side of the membrane. N-linked (GlcNAc...) asparagine glycosylation is present at Asn-45. Residues 54 to 74 (EIFPVWTYSYLVLLLPVLVLT) form a helical membrane-spanning segment. The Cytoplasmic portion of the chain corresponds to 75–81 (DYVRYKP). Residues 82-102 (VIILQGISFIITWLLLLFGQG) form a helical membrane-spanning segment. Over 103–110 (VKTMQVVE) the chain is Extracellular. Residues 111 to 131 (FFYGMVTATEVAYYAYIYSVV) traverse the membrane as a helical segment. The Cytoplasmic segment spans residues 132–144 (SPEHYQRVSGYCR). Residues 145 to 165 (SVTLVAYTAGSVLAQLLVSLA) traverse the membrane as a helical segment. A glycan (N-linked (GlcNAc...) asparagine) is linked at Asn-166. Topologically, residues 166–169 (NLSY) are extracellular. Residues 170-190 (FYLNVISLASVSVAFLFSLFL) form a helical membrane-spanning segment. At 191-282 (PMPKKSMFFH…YSSKRLFYWS (92 aa)) the chain is on the cytoplasmic side. A disordered region spans residues 210-248 (SSSVNPVLEETHEGEAPDCEKQKPTSEIPSTSGKLHKGQ). Over residues 218-233 (EETHEGEAPDCEKQKP) the composition is skewed to basic and acidic residues. Over residues 234–248 (TSEIPSTSGKLHKGQ) the composition is skewed to polar residues. Residues 283-303 (LWWAFATAGFNQILNYVQILW) traverse the membrane as a helical segment. Over 304–316 (DYKSPSQDSSIYN) the chain is Extracellular. Residues 317–337 (GAVEATATFGGAVAAFAVGYV) form a helical membrane-spanning segment. The Cytoplasmic segment spans residues 338–342 (KVNWD). A helical transmembrane segment spans residues 343 to 363 (LLGELALAVFSVVNAGSLFLM). Topologically, residues 364-375 (HYTANIWACYAG) are extracellular. A helical membrane pass occupies residues 376-396 (YLIFKSSYMLLITIAVFQIAV). The Cytoplasmic segment spans residues 397-405 (NLSVERYAL). The helical transmembrane segment at 406-426 (VFGINTFIALVIQTIITVIVV) threads the bilayer. Topologically, residues 427 to 434 (DQRGLNLP) are extracellular. Residues 435–455 (ISIQFLVYGSYFAVIAGIFLM) form a helical membrane-spanning segment. The Cytoplasmic segment spans residues 456–496 (RSMYIIYSTKSQKDVQSPAPSENPDMSHPEEESNAIMSTKL). Residues 469–496 (DVQSPAPSENPDMSHPEEESNAIMSTKL) form a disordered region.

It belongs to the reduced folate carrier (RFC) transporter (TC 2.A.48) family.

The protein localises to the membrane. The enzyme catalyses thiamine(out) + H(+)(in) = thiamine(in) + H(+)(out). The catalysed reaction is pyridoxine(out) + n H(+)(out) = pyridoxine(in) + n H(+)(in). Functionally, mediates high affinity thiamine uptake, probably via a proton anti-port mechanism. Has no folate transport activity. Mediates H(+)-dependent pyridoxine transport. The sequence is that of Thiamine transporter 2 (SLC19A3) from Macaca fascicularis (Crab-eating macaque).